Reading from the N-terminus, the 181-residue chain is Ubiquitin-conjugating enzyme E2 19 (181 aa).

The segment covering 1-10 has biased composition (polar residues); that stretch reads MATVNGYTGN. Residues 1-33 are disordered; that stretch reads MATVNGYTGNTPAATTPAATGSKQSAPPTKTVD. Low complexity predominate over residues 11-20; it reads TPAATTPAAT. The region spanning 36–181 is the UBC core domain; the sequence is SVLKRLQSEL…VEKLYKPLNA (146 aa). The Glycyl thioester intermediate role is filled by Cys-120.

It belongs to the ubiquitin-conjugating enzyme family. Interacts with OR. Binds to LOT1. Expressed in all tissues with cell division activities and in mature leaves.

Its subcellular location is the cytoplasm. The protein localises to the nucleus. The catalysed reaction is S-ubiquitinyl-[E1 ubiquitin-activating enzyme]-L-cysteine + [E2 ubiquitin-conjugating enzyme]-L-cysteine = [E1 ubiquitin-activating enzyme]-L-cysteine + S-ubiquitinyl-[E2 ubiquitin-conjugating enzyme]-L-cysteine.. The protein operates within protein modification; protein ubiquitination. Its function is as follows. Accepts the ubiquitin from the E1 complex and catalyzes its covalent attachment to other proteins. Part of the anaphase-promoting complex (APC). May have a key function during cell cycle and be involved in cyclin B1 degradation. Triggers OR ubiquitination that mediates its subsequent nuclear localization. Involved in the repression of early light-induced proteins (ELIPs, e.g. ELIP1 and ELIP2) expression, probably via OR nuclear relocalization. This chain is Ubiquitin-conjugating enzyme E2 19, found in Arabidopsis thaliana (Mouse-ear cress).